We begin with the raw amino-acid sequence, 315 residues long: Probable integrase/recombinase aq_aa09 (315 aa).

One can recognise a Core-binding (CB) domain in the interval 1-78; the sequence is MEHFIDTYLY…EVRLFYEWLQ (78 aa). One can recognise a Tyr recombinase domain in the interval 106 to 313; the sequence is SKKKYYSDDE…REKQLEAILE (208 aa). Active-site residues include R150, K186, H263, R266, and H289. The active-site O-(3'-phospho-DNA)-tyrosine intermediate is the Y299.

This sequence belongs to the 'phage' integrase family.

Functionally, may function as an integrase. The polypeptide is Probable integrase/recombinase aq_aa09 (Aquifex aeolicus (strain VF5)).